Reading from the N-terminus, the 309-residue chain is Glutaminase (309 aa).

Residues serine 64, asparagine 114, glutamate 160, asparagine 167, tyrosine 191, tyrosine 243, and valine 261 each coordinate substrate.

It belongs to the glutaminase family. As to quaternary structure, homotetramer.

It carries out the reaction L-glutamine + H2O = L-glutamate + NH4(+). The sequence is that of Glutaminase from Methylobacterium nodulans (strain LMG 21967 / CNCM I-2342 / ORS 2060).